The following is a 180-amino-acid chain: Inosine/xanthosine triphosphatase (180 aa).

8–13 is a substrate binding site; it reads TTNPAK. The Mg(2+) site is built by aspartate 38 and glutamate 68. 68-69 lines the substrate pocket; that stretch reads EA.

It belongs to the YjjX NTPase family. Homodimer. The cofactor is Mg(2+). Requires Mn(2+) as cofactor.

The catalysed reaction is XTP + H2O = XDP + phosphate + H(+). The enzyme catalyses ITP + H2O = IDP + phosphate + H(+). In terms of biological role, phosphatase that hydrolyzes non-canonical purine nucleotides such as XTP and ITP to their respective diphosphate derivatives. Probably excludes non-canonical purines from DNA/RNA precursor pool, thus preventing their incorporation into DNA/RNA and avoiding chromosomal lesions. In Yersinia pestis bv. Antiqua (strain Antiqua), this protein is Inosine/xanthosine triphosphatase.